Reading from the N-terminus, the 295-residue chain is Caffeine dehydrogenase subunit beta (295 aa).

Residues 1–178 (MKPTAFDYIR…CEIRIPVPSQ (178 aa)) enclose the FAD-binding PCMH-type domain. Residues 32 to 36 (AGGQS) and 111 to 115 (TLGGN) each bind FAD.

As to quaternary structure, heterotrimer composed of an alpha (CdhA), a beta (CdhB) and a gamma (CdhC) subunit.

The catalysed reaction is caffeine + a ubiquinone + H2O = 1,3,7-trimethylurate + a ubiquinol. It catalyses the reaction ubiquinone-0 + caffeine + H2O = ubiquinol-0 + 1,3,7-trimethylurate. The enzyme catalyses theobromine + a ubiquinone + H2O = 3,7-dimethylurate + a ubiquinol. Its function is as follows. Component of the caffeine dehydrogenase complex that catalyzes the hydrolytical oxidation of 1,3,7-trimethylxanthine (caffeine) by incorporation of an oxygen atom originating from a water molecule into position C-8 to produce 1,3,7-trimethyluric acid (TMU). Coenzyme Q0 (ubiquinone-0) is the preferred electron acceptor and, to a lesser extent, coenzyme Q2 (ubiquinone-2) can also be used, but oxygen and NAD(P)(+) cannot. Is involved in a caffeine degradation pathway that allows Pseudomonas sp. strain CBB1 to grow on caffeine as the sole carbon and nitrogen source. Is also active with theobromine as substrate, but shows a very poor activity with theophylline and is not active with xanthine, 3-methylxanthine, 7-methylxanthine, TMU, and 3,7-dimethylurate. This chain is Caffeine dehydrogenase subunit beta, found in Pseudomonas sp. (strain CBB1).